We begin with the raw amino-acid sequence, 366 residues long: Probable UDP-arabinopyranose mutase 2 (366 aa).

A DXD motif motif is present at residues 104 to 106; sequence DDD. The N-linked (Glc...) arginine glycan is linked to Arg-152.

This sequence belongs to the RGP family. In terms of assembly, homopentamer or homohexamer. Mn(2+) is required as a cofactor. Mg(2+) serves as cofactor. Post-translationally, reversibly glycosylated by UDP-glucose, UDP-xylose and UDP-galactose, but not UDP-mannose. In terms of tissue distribution, expressed in all tissues tested, including root, tuber, leaf, petiole, shoot, stolon and stem.

The protein resides in the secreted. Its subcellular location is the cell wall. It is found in the cell junction. It localises to the plasmodesma. The protein localises to the golgi apparatus. The catalysed reaction is UDP-beta-L-arabinofuranose = UDP-beta-L-arabinopyranose. Functionally, probable UDP-L-arabinose mutase involved in the biosynthesis of cell wall non-cellulosic polysaccharides. Was initially shown to possess an autoglycosylating activity which is dependent on the presence of UDP-glucose and manganese. The protein is Probable UDP-arabinopyranose mutase 2 of Solanum tuberosum (Potato).